Here is a 96-residue protein sequence, read N- to C-terminus: RING finger protein Z (96 aa).

Residues 1 to 10 show a composition bias toward basic and acidic residues; that stretch reads MGNCRSKQES. The tract at residues 1–21 is disordered; sequence MGNCRSKQESHPICPNTQTPE. Gly2 carries N-myristoyl glycine; by host lipidation. The segment at 41–77 adopts an RING-type; atypical zinc-finger fold; it reads CKCCWFADRNLINCSDHYLCLRCLNVMLRTSNLCNIC. The short motif at 91-94 is the PTAP/PSAP motif element; sequence PTAP.

The protein belongs to the arenaviridae Z protein family. Interacts with protein NP; this interaction probably directs the encapsidated genome to budding sites. Interacts (via RING domain) with polymerase L; this interaction inhibits viral transcription and replication, Z partially blocks the product exit tunnel for the releasing nascent RNA product. Interacts with the glycoprotein complex; this interaction plays a role in virion budding. Interacts with host eIF4E; this interaction results in eIF4E reduced affinity for its substrate, the 5'-m7 G cap structure. Interacts (via late-budding domain) with host TSG101; this interaction is essential for budding and release of viral particles. Interacts with host RPLP0; this interaction may serve to load ribosome-like particles inside the virion. Interacts with host PML; this interaction induces PML bodies redistribution in the cytoplasm upon viral infection. Myristoylation is required for the role of RING finger protein Z in assembly and budding.

It localises to the virion. Its subcellular location is the host cytoplasm. The protein localises to the host perinuclear region. It is found in the host cell membrane. In terms of biological role, plays a crucial role in virion assembly and budding. Expressed late in the virus life cycle, it acts as an inhibitor of viral transcription and RNA synthesis by interacting with the viral polymerase L. Presumably recruits the NP encapsidated genome to cellular membranes at budding sites via direct interaction with NP. Plays critical roles in the final steps of viral release by interacting with host TSG101, a member of the vacuolar protein-sorting pathway and using other cellular host proteins involved in vesicle formation pathway. The budding of the virus progeny occurs after association of protein Z with the viral glycoprotein complex SSP-GP1-GP2 at the cell periphery, step that requires myristoylation of protein Z. Also selectively represses protein production by associating with host eIF4E. In cell-based minigenome assay, has an inhibitory effect on the ribonucleoprotein machinery (vRNP), which is responsible for the replication and transcription of the viral genome. This is RING finger protein Z from Hylaeamys megacephalus (Large-headed rice rat).